A 233-amino-acid chain; its full sequence is Putative cobalt transport protein CbiM (233 aa).

Helical transmembrane passes span Pro-9–Val-29, Pro-43–Val-63, Leu-75–Phe-95, Thr-107–Tyr-127, Thr-138–Val-158, and Ile-177–Ile-197.

The protein belongs to the CbiM family. As to quaternary structure, forms an energy-coupling factor (ECF) transporter complex composed of an ATP-binding protein (A component, CbiO), a transmembrane protein (T component, CbiQ) and 2 possible substrate-capture proteins (S components, CbiM and CbiN) of unknown stoichimetry.

Its subcellular location is the cell membrane. The protein operates within cofactor biosynthesis; adenosylcobalamin biosynthesis. Its function is as follows. Part of the energy-coupling factor (ECF) transporter complex CbiMNOQ involved in cobalt import. This Methanocaldococcus jannaschii (strain ATCC 43067 / DSM 2661 / JAL-1 / JCM 10045 / NBRC 100440) (Methanococcus jannaschii) protein is Putative cobalt transport protein CbiM.